The primary structure comprises 254 residues: Phosphoribosylaminoimidazole-succinocarboxamide synthase (254 aa).

This sequence belongs to the SAICAR synthetase family.

It carries out the reaction 5-amino-1-(5-phospho-D-ribosyl)imidazole-4-carboxylate + L-aspartate + ATP = (2S)-2-[5-amino-1-(5-phospho-beta-D-ribosyl)imidazole-4-carboxamido]succinate + ADP + phosphate + 2 H(+). It functions in the pathway purine metabolism; IMP biosynthesis via de novo pathway; 5-amino-1-(5-phospho-D-ribosyl)imidazole-4-carboxamide from 5-amino-1-(5-phospho-D-ribosyl)imidazole-4-carboxylate: step 1/2. The chain is Phosphoribosylaminoimidazole-succinocarboxamide synthase from Brucella melitensis biotype 2 (strain ATCC 23457).